The following is a 317-amino-acid chain: 3-oxoacyl-[acyl-carrier-protein] reductase 5, chloroplastic (317 aa).

The N-terminal 57 residues, 1–57 (TTVAATKLTSLKATAGKLGYREICQVRQWAPLKSAMPHFGMLRCATSTVVKAQAQAQ), are a transit peptide targeting the chloroplast. 79–103 (VTGASRGIGKAIALSLGKAGCKVLV) contacts NADP(+). S211 provides a ligand contact to substrate. Y224 functions as the Proton acceptor in the catalytic mechanism.

Belongs to the short-chain dehydrogenases/reductases (SDR) family. Homotetramer.

The protein resides in the plastid. It localises to the chloroplast. The catalysed reaction is a (3R)-hydroxyacyl-[ACP] + NADP(+) = a 3-oxoacyl-[ACP] + NADPH + H(+). Its pathway is lipid metabolism; fatty acid biosynthesis. This Brassica napus (Rape) protein is 3-oxoacyl-[acyl-carrier-protein] reductase 5, chloroplastic (bkr1).